We begin with the raw amino-acid sequence, 206 residues long: MTKVKICGITTLEDALMAVEAGADALGFVFFEKSPRYIGPEAAARIIRELPPFVQVVGLFVNAELDFVNRTADTCGLDLVQLHGEESPAYCGLVRRRVMKAFRVRGAESLAALADYKVSAYLLDAYSPASHGGTGERFDWDHAVAAKGQGRIVLAGGLDPDNVAQAVAKVAPYAVDVSSGVELSPGRKDPEKVRRLIAEAKKIALI.

It belongs to the TrpF family.

The enzyme catalyses N-(5-phospho-beta-D-ribosyl)anthranilate = 1-(2-carboxyphenylamino)-1-deoxy-D-ribulose 5-phosphate. It participates in amino-acid biosynthesis; L-tryptophan biosynthesis; L-tryptophan from chorismate: step 3/5. The sequence is that of N-(5'-phosphoribosyl)anthranilate isomerase from Citrifermentans bemidjiense (strain ATCC BAA-1014 / DSM 16622 / JCM 12645 / Bem) (Geobacter bemidjiensis).